The primary structure comprises 248 residues: Probable transcriptional regulatory protein FTL_0929 (248 aa).

The protein belongs to the TACO1 family.

Its subcellular location is the cytoplasm. The polypeptide is Probable transcriptional regulatory protein FTL_0929 (Francisella tularensis subsp. holarctica (strain LVS)).